A 419-amino-acid chain; its full sequence is L-rhamnose isomerase (419 aa).

Residues His262, Asp294, and Asp296 each coordinate Mn(2+).

This sequence belongs to the rhamnose isomerase family. In terms of assembly, homotetramer. The cofactor is Mn(2+).

It is found in the cytoplasm. It catalyses the reaction L-rhamnopyranose = L-rhamnulose. The protein operates within carbohydrate degradation; L-rhamnose degradation; glycerone phosphate from L-rhamnose: step 1/3. Catalyzes the interconversion of L-rhamnose and L-rhamnulose. In Salmonella enteritidis PT4 (strain P125109), this protein is L-rhamnose isomerase.